The primary structure comprises 97 residues: Sugar transporter SemiSWEET (97 aa).

The region spanning 4–70 (IERIGKALEP…IYGIYHKNPT (67 aa)) is the PQ-loop domain. 3 helical membrane-spanning segments follow: residues 15–35 (MLVM…KLYV), 44–65 (LSLT…YGIY), and 71–91 (IWVG…GIIA).

In terms of assembly, homodimer.

It localises to the cell membrane. The homodimer mediates transmembrane sugar transport down a concentration gradient. Transport is probably effected by rocking-type movements, where a cargo-binding cavity opens first on one and then on the other side of the membrane. The sequence is that of Sugar transporter SemiSWEET from Vibrio sp. (strain N418).